Reading from the N-terminus, the 98-residue chain is Large ribosomal subunit protein uL23 (98 aa).

It belongs to the universal ribosomal protein uL23 family. As to quaternary structure, part of the 50S ribosomal subunit. Contacts protein L29, and trigger factor when it is bound to the ribosome.

Its function is as follows. One of the early assembly proteins it binds 23S rRNA. One of the proteins that surrounds the polypeptide exit tunnel on the outside of the ribosome. Forms the main docking site for trigger factor binding to the ribosome. This is Large ribosomal subunit protein uL23 from Clostridium acetobutylicum (strain ATCC 824 / DSM 792 / JCM 1419 / IAM 19013 / LMG 5710 / NBRC 13948 / NRRL B-527 / VKM B-1787 / 2291 / W).